Here is a 65-residue protein sequence, read N- to C-terminus: U11-theraphotoxin-Cg1a (65 aa).

Positions 1–21 (MKTTILLVILGLTLLFALSAA) are cleaved as a signal peptide. The propeptide occupies 22–29 (TELKDEER). Cystine bridges form between C31/C45, C38/C50, and C44/C57.

The protein belongs to the neurotoxin 10 (Hwtx-1) family. 32 (Jztx-16) subfamily. Expressed by the venom gland.

It localises to the secreted. Its function is as follows. Probable ion channel inhibitor. This Chilobrachys guangxiensis (Chinese earth tiger tarantula) protein is U11-theraphotoxin-Cg1a.